The following is an 828-amino-acid chain: Protein ELFN1 (828 aa).

An N-terminal signal peptide occupies residues 1–25 (MAGHGWGTAWVLVAAATLLHAGGLA). Residues 26 to 418 (QGDCWLIEGD…VPSPSTATHY (393 aa)) are Extracellular-facing. 5 LRR repeats span residues 61–82 (TIVDLRLNENRIRSVQYASLSR), 85–106 (NLTYLNLTKNEIGYIEDGAFSG), 109–130 (NLQVLQLGYNRLRNLTEGMLRG), 133–154 (KLEYLYLQANLIEVVMASAFWE), and 157–178 (NIVNIDLSMNRIQQLGSGTFAG). N85, N90, and N122 each carry an N-linked (GlcNAc...) asparagine glycan. Residues 190-253 (NPFYCSCELL…LSKLQSVCTE (64 aa)) form the LRRCT domain. N210 is a glycosylation site (N-linked (GlcNAc...) asparagine). The tract at residues 258-293 (AEVLGPPRPVPGRSQPGHSPPPPPPEPSDMPCADDE) is disordered. Pro residues predominate over residues 275–285 (HSPPPPPPEPS). One can recognise a Fibronectin type-III domain in the interval 312–399 (QTEARPSMKV…HNHTCLTICL (88 aa)). An N-linked (GlcNAc...) asparagine glycan is attached at N376. A helical membrane pass occupies residues 419 to 439 (IMTILGCLFGMVLVLGAVYYC). Over 440-828 (LRKRRRQEEK…WKGVSAQHKS (389 aa)) the chain is Cytoplasmic. Phosphoserine is present on residues S460 and S646. Disordered stretches follow at residues 627–674 (HHSV…IEKS) and 697–731 (KSRQYGEHRHSYPGSHPAEPPAPPPPPPTHEGLGG). The span at 638-652 (RASTSSSGSARSPRT) shows a compositional bias: low complexity. The segment covering 697 to 706 (KSRQYGEHRH) has biased composition (basic and acidic residues). Over residues 714–725 (AEPPAPPPPPPT) the composition is skewed to pro residues.

In terms of assembly, interacts with PPP1CA. Selectively expressed in perialvear somatostatin (Sst)-containing interneurons.

Its subcellular location is the membrane. It is found in the cell projection. The protein resides in the dendrite. Functionally, postsynaptic protein that regulates circuit dynamics in the central nervous system by modulating the temporal dynamics of interneuron recruitment. Specifically present in excitatory synapses onto oriens-lacunosum molecular (OLM) interneurons and acts as a regulator of presynaptic release probability to direct the formation of highly facilitating pyramidal-OLM synapses. Inhibits phosphatase activity of protein phosphatase 1 (PP1) complexes. In Mus musculus (Mouse), this protein is Protein ELFN1 (Elfn1).